A 391-amino-acid chain; its full sequence is PPE family protein PPE18 (391 aa).

This sequence belongs to the mycobacterial PPE family. As to quaternary structure, interacts with human TLR2.

It localises to the secreted. It is found in the cell wall. The protein resides in the cell surface. Could be a crucial virulence factor for intracellular survival of M.tuberculosis. Favors development of Th2-type response, and down-regulates the pro-inflammatory and Th1-type response. Specifically interacts with the human Toll-like receptor 2 (TLR2), leading to an early and sustained activation of p38 MAPK, which induces IL-10 production and activates Th2-type immune response. Also inhibits pro-inflammatory cytokines IL-12p40 and TNF-alpha production. Acts by up-regulating the expression as well as tyrosine phosphorylation of suppressor of cytokine signaling 3 (SOCS-3), leading to the inhibition of phosphorylation of I-kappa-B-alpha, thereby preventing nuclear translocation of the NF-kappa-B/REL subunits and expression of NF-kappa-B regulated genes like IL-12 and TNF-alpha. Induction of SOCS-3 probably depends on the activation of p38 MAPK. The polypeptide is PPE family protein PPE18 (Mycobacterium tuberculosis (strain ATCC 25618 / H37Rv)).